We begin with the raw amino-acid sequence, 299 residues long: Taste receptor type 2 member 19 (299 aa).

Met1 is a topological domain (extracellular). The helical transmembrane segment at Met2–Val22 threads the bilayer. The Cytoplasmic portion of the chain corresponds to Ala23–Arg55. The helical transmembrane segment at Ile56 to Tyr76 threads the bilayer. Over Gly77–Ala87 the chain is Extracellular. Residues Trp88–Leu108 form a helical membrane-spanning segment. Topologically, residues Lys109 to Ser127 are cytoplasmic. Residues Val128–Thr148 form a helical membrane-spanning segment. The Extracellular segment spans residues Met149 to Thr181. Asn161 is a glycosylation site (N-linked (GlcNAc...) asparagine). The helical transmembrane segment at Leu182–Leu202 threads the bilayer. Residues Cys203–Lys226 lie on the Cytoplasmic side of the membrane. Residues Ala227–Thr247 traverse the membrane as a helical segment. Topologically, residues Ser248–Leu259 are extracellular. A helical transmembrane segment spans residues Val260 to Ile280. The Cytoplasmic segment spans residues Met281–Arg299.

Belongs to the G-protein coupled receptor T2R family. In terms of tissue distribution, expressed in subsets of taste receptor cells of the tongue and exclusively in gustducin-positive cells.

The protein resides in the membrane. Its function is as follows. Receptor that may play a role in the perception of bitterness and is gustducin-linked. May play a role in sensing the chemical composition of the gastrointestinal content. The activity of this receptor may stimulate alpha gustducin, mediate PLC-beta-2 activation and lead to the gating of TRPM5. The sequence is that of Taste receptor type 2 member 19 (TAS2R19) from Homo sapiens (Human).